We begin with the raw amino-acid sequence, 317 residues long: 4-diphosphocytidyl-2-C-methyl-D-erythritol kinase (317 aa).

The active site involves lysine 11. ATP is bound at residue 99-109 (PVAAGLAGGST). Aspartate 141 is an active-site residue.

The protein belongs to the GHMP kinase family. IspE subfamily.

The enzyme catalyses 4-CDP-2-C-methyl-D-erythritol + ATP = 4-CDP-2-C-methyl-D-erythritol 2-phosphate + ADP + H(+). The protein operates within isoprenoid biosynthesis; isopentenyl diphosphate biosynthesis via DXP pathway; isopentenyl diphosphate from 1-deoxy-D-xylulose 5-phosphate: step 3/6. Catalyzes the phosphorylation of the position 2 hydroxy group of 4-diphosphocytidyl-2C-methyl-D-erythritol. This is 4-diphosphocytidyl-2-C-methyl-D-erythritol kinase from Nostoc punctiforme (strain ATCC 29133 / PCC 73102).